A 120-amino-acid chain; its full sequence is uncharacterized protein (120 aa).

It to M.jannaschii MJ1503.

This is an uncharacterized protein from Methanocaldococcus jannaschii (strain ATCC 43067 / DSM 2661 / JAL-1 / JCM 10045 / NBRC 100440) (Methanococcus jannaschii).